The following is a 127-amino-acid chain: Small ribosomal subunit protein uS11 (127 aa).

Belongs to the universal ribosomal protein uS11 family. Part of the 30S ribosomal subunit. Interacts with proteins S7 and S18. Binds to IF-3.

Located on the platform of the 30S subunit, it bridges several disparate RNA helices of the 16S rRNA. Forms part of the Shine-Dalgarno cleft in the 70S ribosome. In Lactococcus lactis subsp. lactis (strain IL1403) (Streptococcus lactis), this protein is Small ribosomal subunit protein uS11.